Here is a 185-residue protein sequence, read N- to C-terminus: MINEIKKDTQERMEKSLEALKGHISKIRTGRAQPSLLDAIQVEYYGSATPLRQLANVVAEDARTLAVTVFDRSLISAVEKAILTSDLGLNPSSAGTTIRVPLPPLTEERRRDLIKIVKGEGEQGKVSIRNIRRDANDKIKTLEKEKQISENDERKAQDDIQKITDIYIKKVDEILADKEKELMDF.

It belongs to the RRF family.

The protein localises to the cytoplasm. Functionally, responsible for the release of ribosomes from messenger RNA at the termination of protein biosynthesis. May increase the efficiency of translation by recycling ribosomes from one round of translation to another. The sequence is that of Ribosome-recycling factor from Glaesserella parasuis serovar 5 (strain SH0165) (Haemophilus parasuis).